Consider the following 276-residue polypeptide: Foldase protein PrsA (276 aa).

Positions 1 to 18 are cleaved as a signal peptide; that stretch reads MRKWMIVAAVAAVFGLSA. C19 carries the N-palmitoyl cysteine lipid modification. C19 carries the S-diacylglycerol cysteine lipid modification. Positions 133–223 constitute a PpiC domain; sequence KPKIRASHIL…YGYHIIKVTD (91 aa).

The protein belongs to the PrsA family.

It is found in the cell membrane. It carries out the reaction [protein]-peptidylproline (omega=180) = [protein]-peptidylproline (omega=0). Functionally, plays a major role in protein secretion by helping the post-translocational extracellular folding of several secreted proteins. In Geobacillus sp. (strain WCH70), this protein is Foldase protein PrsA.